Here is an 80-residue protein sequence, read N- to C-terminus: Large ribosomal subunit protein uL24 (80 aa).

The interval 53-80 is disordered; sequence HMKPTQSHPQGSIIEREFPIHASNVKKS.

It belongs to the universal ribosomal protein uL24 family. In terms of assembly, part of the 50S ribosomal subunit.

Its function is as follows. One of two assembly initiator proteins, it binds directly to the 5'-end of the 23S rRNA, where it nucleates assembly of the 50S subunit. One of the proteins that surrounds the polypeptide exit tunnel on the outside of the subunit. This chain is Large ribosomal subunit protein uL24, found in Chlorobium limicola (strain DSM 245 / NBRC 103803 / 6330).